The sequence spans 107 residues: Early E3A 12.5 kDa protein (107 aa).

Belongs to the adenoviridae E3A-2 family.

Not yet known. The protein is Early E3A 12.5 kDa protein of Human adenovirus C serotype 5 (HAdV-5).